A 448-amino-acid polypeptide reads, in one-letter code: MMKDGLYDLFCESLESLALKPGQQLVAALGGGADSQTILDLLMRFRQQNPQYQYLAIHLDHSFHPSSADWSSTIEHAAKSYGVKTVFEPLNVPIENRQSKEAAGRESRYRRMAELTEDDAVLLLGQHRNDQIETFFLQLKRGSGPKGLSSMAAIQPWVGSRRLCRPLLSVSKEDILSYAQQQKLTWIEDDTNYDTRIERNFLRHKVVPLLEQRWPQFGNSVLRSAKLCAEQQQVMDELLQEKLYKAQKHKSHFPLSLLSEHSAAMQRALLRVWLQGQEYSLPSYEQLEQIRLQAQSATDDSQMQVQCDGYSVRYFQYALWCDNNTGQLPADCWLAEANVNLGEWGTLSVPDALLTNNNELRLTFSLTSEKLAKPGRQGRKKLKDWLKQAGIPPWLRARRPILELNGKYVWVAGLGWFSYQVIEKTEFDSLQLPEPDWVSSGADSYRQL.

30-35 (GGGADS) serves as a coordination point for ATP.

Belongs to the tRNA(Ile)-lysidine synthase family.

It localises to the cytoplasm. It carries out the reaction cytidine(34) in tRNA(Ile2) + L-lysine + ATP = lysidine(34) in tRNA(Ile2) + AMP + diphosphate + H(+). Its function is as follows. Ligates lysine onto the cytidine present at position 34 of the AUA codon-specific tRNA(Ile) that contains the anticodon CAU, in an ATP-dependent manner. Cytidine is converted to lysidine, thus changing the amino acid specificity of the tRNA from methionine to isoleucine. The polypeptide is tRNA(Ile)-lysidine synthase (Idiomarina loihiensis (strain ATCC BAA-735 / DSM 15497 / L2-TR)).